We begin with the raw amino-acid sequence, 328 residues long: uncharacterized protein (328 aa).

Positions 1–25 are cleaved as a signal peptide; the sequence is MKLFNFKKLSMLIAGFTLVTSPALA.

It belongs to the bacterial solute-binding protein 7 family.

The protein localises to the periplasm. This is an uncharacterized protein from Haemophilus influenzae (strain ATCC 51907 / DSM 11121 / KW20 / Rd).